The following is a 518-amino-acid chain: 3-octaprenyl-4-hydroxybenzoate carboxy-lyase (518 aa).

Asn-177 is a Mn(2+) binding site. Residues 180-182 (IYR), 194-196 (RWL), and 199-200 (RG) contribute to the prenylated FMN site. A Mn(2+)-binding site is contributed by Glu-243. The Proton donor role is filled by Asp-318.

Belongs to the UbiD family. Homohexamer. Prenylated FMN serves as cofactor. It depends on Mn(2+) as a cofactor.

It localises to the cell membrane. It catalyses the reaction a 4-hydroxy-3-(all-trans-polyprenyl)benzoate + H(+) = a 2-(all-trans-polyprenyl)phenol + CO2. Its pathway is cofactor biosynthesis; ubiquinone biosynthesis. In terms of biological role, catalyzes the decarboxylation of 3-octaprenyl-4-hydroxy benzoate to 2-octaprenylphenol, an intermediate step in ubiquinone biosynthesis. This chain is 3-octaprenyl-4-hydroxybenzoate carboxy-lyase, found in Burkholderia multivorans (strain ATCC 17616 / 249).